The chain runs to 503 residues: Aromatase (503 aa).

3 helical membrane passes run 19–39 (EVVP…LLVW), 53–73 (FLGI…IGSA), and 303–323 (MLIA…FLIA). Substrate is bound by residues Asp-309 and Met-374. Cys-437 contributes to the heme binding site.

This sequence belongs to the cytochrome P450 family. The cofactor is heme.

It is found in the endoplasmic reticulum membrane. Its subcellular location is the microsome membrane. It catalyses the reaction testosterone + 3 reduced [NADPH--hemoprotein reductase] + 3 O2 = 17beta-estradiol + formate + 3 oxidized [NADPH--hemoprotein reductase] + 4 H2O + 4 H(+). It carries out the reaction androst-4-ene-3,17-dione + 3 reduced [NADPH--hemoprotein reductase] + 3 O2 = estrone + formate + 3 oxidized [NADPH--hemoprotein reductase] + 4 H2O + 4 H(+). The catalysed reaction is androst-4-ene-3,17-dione + reduced [NADPH--hemoprotein reductase] + O2 = 19-hydroxyandrost-4-ene-3,17-dione + oxidized [NADPH--hemoprotein reductase] + H2O + H(+). The enzyme catalyses 19-hydroxyandrost-4-ene-3,17-dione + reduced [NADPH--hemoprotein reductase] + O2 = 19-oxo-androst-4-ene-3,17-dione + oxidized [NADPH--hemoprotein reductase] + 2 H2O + H(+). It catalyses the reaction 19-oxo-androst-4-ene-3,17-dione + reduced [NADPH--hemoprotein reductase] + O2 = estrone + formate + oxidized [NADPH--hemoprotein reductase] + H2O + 2 H(+). It carries out the reaction estrone + reduced [NADPH--hemoprotein reductase] + O2 = 2-hydroxyestrone + oxidized [NADPH--hemoprotein reductase] + H2O + H(+). The catalysed reaction is 17beta-hydroxy-5alpha-androstan-3-one + reduced [NADPH--hemoprotein reductase] + O2 = 17beta,19-dihydroxy-3-oxo-5alpha-androstanone + oxidized [NADPH--hemoprotein reductase] + H2O + H(+). The enzyme catalyses 17beta,19-dihydroxy-3-oxo-5alpha-androstanone + reduced [NADPH--hemoprotein reductase] + O2 = 17beta-hydroxy-3,19-dioxo-5alpha-androstanone + oxidized [NADPH--hemoprotein reductase] + 2 H2O + H(+). It catalyses the reaction 17beta-hydroxy-3,19-dioxo-5alpha-androstanone + reduced [NADPH--hemoprotein reductase] + O2 = 17beta-hydroxy-3-oxo-19-nor-5alpha-androst-1-ene + formate + oxidized [NADPH--hemoprotein reductase] + H2O + 2 H(+). Its pathway is steroid hormone biosynthesis. Its function is as follows. A cytochrome P450 monooxygenase that catalyzes the conversion of C19 androgens, androst-4-ene-3,17-dione (androstenedione) and testosterone to the C18 estrogens, estrone and estradiol, respectively. Catalyzes three successive oxidations of C19 androgens: two conventional oxidations at C19 yielding 19-hydroxy and 19-oxo/19-aldehyde derivatives, followed by a third oxidative aromatization step that involves C1-beta hydrogen abstraction combined with cleavage of the C10-C19 bond to yield a phenolic A ring and formic acid. Alternatively, the third oxidative reaction yields a 19-norsteroid and formic acid. Converts dihydrotestosterone to delta1,10-dehydro 19-nordihydrotestosterone and may play a role in homeostasis of this potent androgen. Also displays 2-hydroxylase activity toward estrone. Mechanistically, uses molecular oxygen inserting one oxygen atom into a substrate, and reducing the second into a water molecule, with two electrons provided by NADPH via cytochrome P450 reductase (CPR; NADPH-ferrihemoprotein reductase). In Capra hircus (Goat), this protein is Aromatase (CYP19A1).